Here is a 380-residue protein sequence, read N- to C-terminus: Glucose-1-phosphate adenylyltransferase (380 aa).

Residues glycine 164, 179-180 (EK), and serine 190 each bind alpha-D-glucose 1-phosphate.

This sequence belongs to the bacterial/plant glucose-1-phosphate adenylyltransferase family. In terms of assembly, homotetramer.

It catalyses the reaction alpha-D-glucose 1-phosphate + ATP + H(+) = ADP-alpha-D-glucose + diphosphate. The protein operates within glycan biosynthesis; glycogen biosynthesis. Its function is as follows. Involved in the biosynthesis of ADP-glucose, a building block required for the elongation reactions to produce glycogen. Catalyzes the reaction between ATP and alpha-D-glucose 1-phosphate (G1P) to produce pyrophosphate and ADP-Glc. The polypeptide is Glucose-1-phosphate adenylyltransferase (Lactococcus lactis subsp. cremoris (strain SK11)).